The chain runs to 461 residues: D-phenylhydantoinase (461 aa).

A divalent metal cation is bound by residues histidine 59, histidine 61, and lysine 151. At lysine 151 the chain carries N6-carboxylysine. Tyrosine 156 is a substrate binding site. Histidine 182 and histidine 239 together coordinate a divalent metal cation. Serine 286 contributes to the substrate binding site. Position 313 (aspartate 313) interacts with a divalent metal cation. Residue asparagine 335 coordinates substrate.

The protein belongs to the metallo-dependent hydrolases superfamily. Hydantoinase/dihydropyrimidinase family. In terms of assembly, homotetramer. A divalent metal cation is required as a cofactor. Post-translationally, carboxylation allows a single lysine to coordinate two divalent metal cations.

It carries out the reaction D-5-phenylhydantoin + H2O = N-carbamoyl-D-phenylglycine + H(+). Catalyzes the stereospecific hydrolysis of the cyclic amide bond of D-hydantoin derivatives with an aromatic side chains at the 5'-position. Has no activity on dihydropyrimidines. The physiological function is unknown. The polypeptide is D-phenylhydantoinase (Escherichia coli O17:K52:H18 (strain UMN026 / ExPEC)).